We begin with the raw amino-acid sequence, 446 residues long: Probable D-serine dehydratase (446 aa).

Lysine 118 carries the post-translational modification N6-(pyridoxal phosphate)lysine.

The protein belongs to the serine/threonine dehydratase family. DsdA subfamily. It depends on pyridoxal 5'-phosphate as a cofactor.

The catalysed reaction is D-serine = pyruvate + NH4(+). This is Probable D-serine dehydratase from Ectopseudomonas mendocina (strain ymp) (Pseudomonas mendocina).